A 182-amino-acid polypeptide reads, in one-letter code: UPF0149 protein HI_0817 (182 aa).

This sequence belongs to the UPF0149 family.

This is UPF0149 protein HI_0817 from Haemophilus influenzae (strain ATCC 51907 / DSM 11121 / KW20 / Rd).